Reading from the N-terminus, the 98-residue chain is Large ribosomal subunit protein uL23 (98 aa).

This sequence belongs to the universal ribosomal protein uL23 family. As to quaternary structure, part of the 50S ribosomal subunit. Contacts protein L29, and trigger factor when it is bound to the ribosome.

Functionally, one of the early assembly proteins it binds 23S rRNA. One of the proteins that surrounds the polypeptide exit tunnel on the outside of the ribosome. Forms the main docking site for trigger factor binding to the ribosome. The chain is Large ribosomal subunit protein uL23 from Rickettsia prowazekii (strain Madrid E).